Consider the following 344-residue polypeptide: Serine proteinase inhibitor 2 (344 aa).

It belongs to the serpin family. Poxviruses subfamily.

It localises to the host cytoplasm. In terms of biological role, viral serpin that inhibits both cysteine and serine proteinases involved in the regulation of host inflammatory and apoptosis processes. Major anti-apoptotic protein which inhibits both intrinsic and extrinsic pathways and strongly cleaves host CASP1 and CASP8 but is a rather poor inhibitor of host CASP3. Prevents the proteolytic activity of host interleukin-1-beta converting enzyme (ICE) and ICE-like enzymes. Can also block apoptosis through host tumor necrosis factor (TNF) receptor. The inhibition of host ICE is an example of a 'cross-class' interaction, in which a serpin inhibits a non-serine proteinase. Also inhibits granzyme B. This is Serine proteinase inhibitor 2 (OPG199) from Homo sapiens (Human).